Consider the following 345-residue polypeptide: Ribosomal RNA small subunit methyltransferase C (345 aa).

This sequence belongs to the methyltransferase superfamily. RsmC family. In terms of assembly, monomer.

It localises to the cytoplasm. The enzyme catalyses guanosine(1207) in 16S rRNA + S-adenosyl-L-methionine = N(2)-methylguanosine(1207) in 16S rRNA + S-adenosyl-L-homocysteine + H(+). In terms of biological role, specifically methylates the guanine in position 1207 of 16S rRNA in the 30S particle. In Shewanella denitrificans (strain OS217 / ATCC BAA-1090 / DSM 15013), this protein is Ribosomal RNA small subunit methyltransferase C.